Consider the following 556-residue polypeptide: Small ribosomal subunit protein uS3m (556 aa).

Belongs to the universal ribosomal protein uS3 family. Component of the mitochondrial ribosome small subunit.

The protein resides in the mitochondrion. The sequence is that of Small ribosomal subunit protein uS3m (RPS3) from Arabidopsis thaliana (Mouse-ear cress).